A 701-amino-acid chain; its full sequence is DNA ligase (701 aa).

Residues 1 to 21 are disordered; it reads MSAKSTPDAGPQEQATEAEAE. NAD(+) is bound by residues 50-54, 100-101, and Glu130; these read DADFD and SL. Residue Lys132 is the N6-AMP-lysine intermediate of the active site. The NAD(+) site is built by Arg153, Glu193, Lys309, and Lys333. Zn(2+)-binding residues include Cys427, Cys430, Cys446, and Cys452. The BRCT domain occupies 616 to 701; sequence SIARTLEGLS…LENGPQAPEG (86 aa).

This sequence belongs to the NAD-dependent DNA ligase family. LigA subfamily. Requires Mg(2+) as cofactor. Mn(2+) serves as cofactor.

It catalyses the reaction NAD(+) + (deoxyribonucleotide)n-3'-hydroxyl + 5'-phospho-(deoxyribonucleotide)m = (deoxyribonucleotide)n+m + AMP + beta-nicotinamide D-nucleotide.. In terms of biological role, DNA ligase that catalyzes the formation of phosphodiester linkages between 5'-phosphoryl and 3'-hydroxyl groups in double-stranded DNA using NAD as a coenzyme and as the energy source for the reaction. It is essential for DNA replication and repair of damaged DNA. The chain is DNA ligase from Mycobacterium sp. (strain KMS).